A 197-amino-acid chain; its full sequence is 7-methyl-GTP pyrophosphatase (197 aa).

Catalysis depends on Asp69, which acts as the Proton acceptor.

It belongs to the Maf family. YceF subfamily. It depends on a divalent metal cation as a cofactor.

Its subcellular location is the cytoplasm. The enzyme catalyses N(7)-methyl-GTP + H2O = N(7)-methyl-GMP + diphosphate + H(+). Its function is as follows. Nucleoside triphosphate pyrophosphatase that hydrolyzes 7-methyl-GTP (m(7)GTP). May have a dual role in cell division arrest and in preventing the incorporation of modified nucleotides into cellular nucleic acids. The sequence is that of 7-methyl-GTP pyrophosphatase from Pectobacterium atrosepticum (strain SCRI 1043 / ATCC BAA-672) (Erwinia carotovora subsp. atroseptica).